The following is a 64-amino-acid chain: Putative antitoxin MJ0975 (64 aa).

Belongs to the UPF0165 family.

In terms of biological role, possibly the antitoxin component of a type II toxin-antitoxin (TA) system. Its cognate toxin is VapC2 (Potential). In Methanocaldococcus jannaschii (strain ATCC 43067 / DSM 2661 / JAL-1 / JCM 10045 / NBRC 100440) (Methanococcus jannaschii), this protein is Putative antitoxin MJ0975 (vapB2).